A 204-amino-acid polypeptide reads, in one-letter code: 8-oxoguanine DNA glycosylase/AP lyase (204 aa).

Catalysis depends on residues lysine 129 and aspartate 147.

It belongs to the type-2 OGG1 family.

It catalyses the reaction 2'-deoxyribonucleotide-(2'-deoxyribose 5'-phosphate)-2'-deoxyribonucleotide-DNA = a 3'-end 2'-deoxyribonucleotide-(2,3-dehydro-2,3-deoxyribose 5'-phosphate)-DNA + a 5'-end 5'-phospho-2'-deoxyribonucleoside-DNA + H(+). In terms of biological role, catalyzes the excision of an oxidatively damaged form of guanine (7,8-dihydro-8-oxoguanine = 8-oxoG) from DNA. Also cleaves the DNA backbone at apurinic/apyrimidinic sites (AP sites). The polypeptide is 8-oxoguanine DNA glycosylase/AP lyase (Thermoplasma acidophilum (strain ATCC 25905 / DSM 1728 / JCM 9062 / NBRC 15155 / AMRC-C165)).